A 70-amino-acid polypeptide reads, in one-letter code: Small ribosomal subunit protein bS21 (70 aa).

The interval 40–70 (KPTAERKRKHAAAVKRHYKRIRSQQLPPRLY) is disordered. A compositionally biased stretch (basic residues) spans 45–61 (RKRKHAAAVKRHYKRIR).

It belongs to the bacterial ribosomal protein bS21 family.

The chain is Small ribosomal subunit protein bS21 from Bordetella parapertussis (strain 12822 / ATCC BAA-587 / NCTC 13253).